The sequence spans 123 residues: Small ribosomal subunit protein uS12 (123 aa).

A disordered region spans residues 1–31; sequence MPTINQLIRKPREAQKARDKAPALQASPQKR. Over residues 10–21 the composition is skewed to basic and acidic residues; it reads KPREAQKARDKA. Aspartate 89 bears the 3-methylthioaspartic acid mark.

This sequence belongs to the universal ribosomal protein uS12 family. In terms of assembly, part of the 30S ribosomal subunit. Contacts proteins S8 and S17. May interact with IF1 in the 30S initiation complex.

Its function is as follows. With S4 and S5 plays an important role in translational accuracy. Functionally, interacts with and stabilizes bases of the 16S rRNA that are involved in tRNA selection in the A site and with the mRNA backbone. Located at the interface of the 30S and 50S subunits, it traverses the body of the 30S subunit contacting proteins on the other side and probably holding the rRNA structure together. The combined cluster of proteins S8, S12 and S17 appears to hold together the shoulder and platform of the 30S subunit. The polypeptide is Small ribosomal subunit protein uS12 (Xanthobacter autotrophicus (strain ATCC BAA-1158 / Py2)).